The sequence spans 329 residues: L-arabinose-binding periplasmic protein (329 aa).

The first 23 residues, 1 to 23, serve as a signal peptide directing secretion; sequence MHKFTKALAAIGLAAVMSQSAMA.

Belongs to the bacterial solute-binding protein 2 family.

The protein localises to the periplasm. In terms of biological role, involved in the high-affinity L-arabinose membrane transport system. Binds with high affinity to arabinose, but can also bind D-galactose (approximately 2-fold reduction) and D-fucose (approximately 40-fold reduction). This is L-arabinose-binding periplasmic protein (araF) from Escherichia coli (strain K12).